The following is a 209-amino-acid chain: Guanylate kinase (209 aa).

A Guanylate kinase-like domain is found at 9 to 188 (GIMLVMSSPS…SVQQIKSIFI (180 aa)). Residue 16–23 (SPSGGGKT) participates in ATP binding.

This sequence belongs to the guanylate kinase family.

The protein localises to the cytoplasm. The enzyme catalyses GMP + ATP = GDP + ADP. Its function is as follows. Essential for recycling GMP and indirectly, cGMP. The protein is Guanylate kinase of Ehrlichia ruminantium (strain Gardel).